The primary structure comprises 143 residues: NADH-quinone oxidoreductase subunit A (143 aa).

A run of 3 helical transmembrane segments spans residues 12-32 (YIVG…FLGG), 61-81 (FYLI…LYIW), and 90-110 (WIGF…LIYA).

Belongs to the complex I subunit 3 family. In terms of assembly, NDH-1 is composed of 13 different subunits. Subunits NuoA, H, J, K, L, M, N constitute the membrane sector of the complex.

Its subcellular location is the cell inner membrane. The catalysed reaction is a quinone + NADH + 5 H(+)(in) = a quinol + NAD(+) + 4 H(+)(out). Functionally, NDH-1 shuttles electrons from NADH, via FMN and iron-sulfur (Fe-S) centers, to quinones in the respiratory chain. The immediate electron acceptor for the enzyme in this species is believed to be ubiquinone. Couples the redox reaction to proton translocation (for every two electrons transferred, four hydrogen ions are translocated across the cytoplasmic membrane), and thus conserves the redox energy in a proton gradient. The chain is NADH-quinone oxidoreductase subunit A from Blochmanniella floridana.